We begin with the raw amino-acid sequence, 68 residues long: Tabimmunregulin 12 (68 aa).

An N-terminal signal peptide occupies residues 1–24 (MLFKSYVYFLAGLLLVGLFTSCDA). The propeptide occupies 25–38 (DAQYEELVPGFFRK).

Expressed in salivary glands.

It is found in the secreted. Its function is as follows. Horsefly salivary gland immunosuppressant protein that likely inhibits the host inflammatory response by regulation of anti- and pro-inflammatory cytokines. When tested on mouse splenocytes in the presence of LPS, it increases the secretion of the proinflammatory cytokine interleukin-10 (IL10) and decreases the secretion of the proinflammatory cytokine interferon-gamma (IFNG) in a dose-dependent manner. The sequence is that of Tabimmunregulin 12 from Tabanus yao (Horsefly).